A 360-amino-acid chain; its full sequence is Phospho-N-acetylmuramoyl-pentapeptide-transferase (360 aa).

10 helical membrane passes run 25-45, 73-93, 97-117, 132-152, 168-188, 199-219, 236-256, 263-283, 288-308, and 339-359; these read RAIL…PWVI, TMGG…WADL, YVLA…VDDY, WKYF…FVTA, VAWQ…VGFS, GLAI…AYLV, SGEL…FLWF, VFMG…IAVI, IVFF…ILQV, and IVRF…TLKI.

Belongs to the glycosyltransferase 4 family. MraY subfamily. Requires Mg(2+) as cofactor.

It localises to the cell inner membrane. The catalysed reaction is UDP-N-acetyl-alpha-D-muramoyl-L-alanyl-gamma-D-glutamyl-meso-2,6-diaminopimeloyl-D-alanyl-D-alanine + di-trans,octa-cis-undecaprenyl phosphate = di-trans,octa-cis-undecaprenyl diphospho-N-acetyl-alpha-D-muramoyl-L-alanyl-D-glutamyl-meso-2,6-diaminopimeloyl-D-alanyl-D-alanine + UMP. It participates in cell wall biogenesis; peptidoglycan biosynthesis. In terms of biological role, catalyzes the initial step of the lipid cycle reactions in the biosynthesis of the cell wall peptidoglycan: transfers peptidoglycan precursor phospho-MurNAc-pentapeptide from UDP-MurNAc-pentapeptide onto the lipid carrier undecaprenyl phosphate, yielding undecaprenyl-pyrophosphoryl-MurNAc-pentapeptide, known as lipid I. The sequence is that of Phospho-N-acetylmuramoyl-pentapeptide-transferase from Teredinibacter turnerae (strain ATCC 39867 / T7901).